The primary structure comprises 364 residues: DNA primase large subunit PriL (364 aa).

Residues Cys237, Cys309, Cys318, and Cys325 each contribute to the [4Fe-4S] cluster site. Positions 345–364 are disordered; the sequence is MQNDNEKGHEEKKEGETPPQ.

This sequence belongs to the eukaryotic-type primase large subunit family. As to quaternary structure, heterodimer of a small subunit (PriS) and a large subunit (PriL). It depends on [4Fe-4S] cluster as a cofactor.

In terms of biological role, regulatory subunit of DNA primase, an RNA polymerase that catalyzes the synthesis of short RNA molecules used as primers for DNA polymerase during DNA replication. Stabilizes and modulates the activity of the small subunit, increasing the rate of DNA synthesis, and conferring RNA synthesis capability. The DNA polymerase activity may enable DNA primase to also catalyze primer extension after primer synthesis. May also play a role in DNA repair. This chain is DNA primase large subunit PriL, found in Methanococcoides burtonii (strain DSM 6242 / NBRC 107633 / OCM 468 / ACE-M).